Here is a 617-residue protein sequence, read N- to C-terminus: Type IV inositol polyphosphate 5-phosphatase 6 (617 aa).

2 disordered regions span residues E30–K62 and D241–S330. A compositionally biased stretch (low complexity) spans F242 to H253. Over residues R254–D290 the composition is skewed to basic and acidic residues. Positions Y291 to S311 are enriched in low complexity. 2 catalytic regions span residues D458 to S473 and K538 to E553.

The protein belongs to the inositol polyphosphate 5-phosphatase family. In terms of tissue distribution, broadly expressed in emerging organs. Mostly localized in procambium of growing organs. Restricted to vascular differentiating cells of young organs.

The catalysed reaction is a 1,2-diacyl-sn-glycero-3-phospho-(1D-myo-inositol-4,5-bisphosphate) + H2O = a 1,2-diacyl-sn-glycero-3-phospho-(1D-myo-inositol 4-phosphate) + phosphate. It carries out the reaction a 1,2-diacyl-sn-glycero-3-phospho-(1D-myo-inositol-3,4,5-trisphosphate) + H2O = a 1,2-diacyl-sn-glycero-3-phospho-(1D-myo-inositol-3,4-bisphosphate) + phosphate. Functionally, has phosphatase activity toward PtdIns(4,5)P2 and PtdIns(3,4,5)P3. Required for the patterning of procambium and during the differentiation of vascular tissues. Acts before the acquisition of preprocambial identity. Seems to be also involved in the abscisic acid (ABA) signaling pathway. Acts redundantly with CVL1 for maintaining vascular continuity. Regulates phosphoinositide-dependent VAN3 localization. This is Type IV inositol polyphosphate 5-phosphatase 6 from Arabidopsis thaliana (Mouse-ear cress).